We begin with the raw amino-acid sequence, 310 residues long: p-hydroxybenzoic acid efflux pump subunit AaeA (310 aa).

Residues 12-32 (AITVVLVILAFIAIFNAWVYY) form a helical membrane-spanning segment.

Belongs to the membrane fusion protein (MFP) (TC 8.A.1) family.

It is found in the cell inner membrane. Its function is as follows. Forms an efflux pump with AaeB. This chain is p-hydroxybenzoic acid efflux pump subunit AaeA, found in Escherichia coli O7:K1 (strain IAI39 / ExPEC).